Consider the following 1037-residue polypeptide: Probable inorganic carbon transporter subunit DabA 2 (1037 aa).

Zn(2+) contacts are provided by C460, D462, H719, and C734.

This sequence belongs to the inorganic carbon transporter (TC 9.A.2) DabA family. In terms of assembly, forms a complex with DabB. Zn(2+) is required as a cofactor.

The protein localises to the cell inner membrane. Part of an energy-coupled inorganic carbon pump. This chain is Probable inorganic carbon transporter subunit DabA 2, found in Nitrobacter winogradskyi (strain ATCC 25391 / DSM 10237 / CIP 104748 / NCIMB 11846 / Nb-255).